The sequence spans 273 residues: Pantothenate synthetase (273 aa).

27-34 (MGALHDGH) contributes to the ATP binding site. The active-site Proton donor is His-34. (R)-pantoate is bound at residue Gln-58. Gln-58 lines the beta-alanine pocket. 144–147 (GKKD) contributes to the ATP binding site. Position 150 (Gln-150) interacts with (R)-pantoate. Residues Val-173 and 181 to 184 (LSSR) each bind ATP.

Belongs to the pantothenate synthetase family. As to quaternary structure, homodimer.

Its subcellular location is the cytoplasm. It catalyses the reaction (R)-pantoate + beta-alanine + ATP = (R)-pantothenate + AMP + diphosphate + H(+). It functions in the pathway cofactor biosynthesis; (R)-pantothenate biosynthesis; (R)-pantothenate from (R)-pantoate and beta-alanine: step 1/1. Its function is as follows. Catalyzes the condensation of pantoate with beta-alanine in an ATP-dependent reaction via a pantoyl-adenylate intermediate. The protein is Pantothenate synthetase of Campylobacter curvus (strain 525.92).